The following is a 180-amino-acid chain: Adenine phosphoribosyltransferase (180 aa).

This sequence belongs to the purine/pyrimidine phosphoribosyltransferase family. As to quaternary structure, homodimer.

The protein localises to the cytoplasm. The enzyme catalyses AMP + diphosphate = 5-phospho-alpha-D-ribose 1-diphosphate + adenine. It participates in purine metabolism; AMP biosynthesis via salvage pathway; AMP from adenine: step 1/1. Its function is as follows. Catalyzes a salvage reaction resulting in the formation of AMP, that is energically less costly than de novo synthesis. The sequence is that of Adenine phosphoribosyltransferase from Haemophilus influenzae (strain 86-028NP).